The sequence spans 97 residues: Secreted Ly-6/uPAR domain-containing protein 2 (97 aa).

An N-terminal signal peptide occupies residues 1 to 22; it reads MQLGTGLLLAAVLSLQLAAAEA. 5 disulfide bridges follow: Cys-25–Cys-47, Cys-28–Cys-34, Cys-40–Cys-68, Cys-72–Cys-88, and Cys-89–Cys-94. A UPAR/Ly6 domain is found at 25–95; it reads CHQCTGFGGC…IACCQTSLCN (71 aa).

Interacts with CHRNA3, CHRNA4, CHRNA5, CHRNA7, CHRNB2 and CHRNB4. Interacts with CHRM1 and CHRM3 probably in an allosteric manner. Expressed at highest levels in cervix and esophagus, followed by adult and fetal skin. Expressed at lower levels in brain, lung, stomach, small intestine, colon, rectum, uterus, and thymus. Not detected in spleen nor bone marrow. Up-regulated 3-fold in psoriatic lesional skin. In the epidermis, predominantly produced by keratinocytes of the suprabasal epidermal compartment (at protein level). In attached gingiva, produced at highest levels by basal cells located in the lowermost epithelial layers (at protein level). Detected in serum (at protein level).

The protein localises to the secreted. In terms of biological role, binds and may modulate the functional properties of nicotinic and muscarinic acetylcholine receptors. May regulate keratinocytes proliferation, differentiation and apoptosis. In vitro moderately inhibits ACh-evoked currents of alpha-3:beta-2-containing nAChRs and strongly these of alpha-4:beta-2-containing nAChRs, modulates alpha-7-containing nAChRs, and inhibits nicotine-induced signaling probably implicating alpha-3:beta-4-containing nAChRs. Proposed to act on alpha-3:beta-2 and alpha-7 nAChRs in an orthosteric, and on mAChRs, such as CHRM1 and CHRM3, in an allosteric manner. This Homo sapiens (Human) protein is Secreted Ly-6/uPAR domain-containing protein 2.